We begin with the raw amino-acid sequence, 333 residues long: Large ribosomal subunit protein mL44 (333 aa).

A mitochondrion-targeting transit peptide spans 1 to 30; that stretch reads MASAVFRLLQQGPRRLLAPAVPTLAPPVRG. Residues 86–228 enclose the RNase III domain; that stretch reads DLLKTAFINS…LITQMTGKEL (143 aa). The region spanning 236–306 is the DRBM domain; that stretch reads NPMGLLVEEL…ARVALRKLYG (71 aa). A compositionally biased stretch (basic and acidic residues) spans 311–327; it reads RRPWDYSKPKESPKRAE. Positions 311 to 333 are disordered; the sequence is RRPWDYSKPKESPKRAEQTSVAS.

The protein belongs to the ribonuclease III family. Mitochondrion-specific ribosomal protein mL44 subfamily. Component of the mitochondrial ribosome large subunit (39S) which comprises a 16S rRNA and about 50 distinct proteins.

The protein resides in the mitochondrion. Its function is as follows. Component of the 39S subunit of mitochondrial ribosome. May have a function in the assembly/stability of nascent mitochondrial polypeptides exiting the ribosome. This chain is Large ribosomal subunit protein mL44 (Mrpl44), found in Mus musculus (Mouse).